The sequence spans 287 residues: MIKGLIYLFLFRCLEGRLADYEEESSDLGDYSLNGQTDEEYGKFPSHVLTEKETGPMDEIRCTNDDYTYNIKLNVHLQNYAIQAIADAAKPKLGMNLKERDAILSYFGTIANELNADLARLGAQIVIGLKHYKAEDFIDTNSFDTSCEIRDPVMDRLDSTFKQLKDVYQDSMGLRLFVWTCPQLTSSFETMKIMSNLNCGRIMGVLWQGADATRTSIKSTILEAISGVSELYLDGALPVDRVFSNVCRFCSKCVGVEPGVIGWKHPDVVKLIHAIPEEDTHEHGYDH.

Residues 1–19 form the signal peptide; the sequence is MIKGLIYLFLFRCLEGRLA.

The protein belongs to the SWP7 family. Interacts with SWP9.

Its subcellular location is the cytoplasm. It is found in the spore wall. It localises to the spore polar tube. In terms of biological role, involved in adherence of spores to the host cell surface and in infection efficiency. The sequence is that of Spore wall protein 7 (SWP7) from Nosema bombycis (strain CQ1 / CVCC 102059) (Microsporidian parasite).